The sequence spans 396 residues: Ornithine aminotransferase (396 aa).

K255 is subject to N6-(pyridoxal phosphate)lysine.

It belongs to the class-III pyridoxal-phosphate-dependent aminotransferase family. OAT subfamily. Pyridoxal 5'-phosphate is required as a cofactor.

It is found in the cytoplasm. The enzyme catalyses a 2-oxocarboxylate + L-ornithine = L-glutamate 5-semialdehyde + an L-alpha-amino acid. The protein operates within amino-acid biosynthesis; L-proline biosynthesis; L-glutamate 5-semialdehyde from L-ornithine: step 1/1. In terms of biological role, catalyzes the interconversion of ornithine to glutamate semialdehyde. This is Ornithine aminotransferase from Staphylococcus carnosus (strain TM300).